The sequence spans 37 residues: Large ribosomal subunit protein bL36 (37 aa).

It belongs to the bacterial ribosomal protein bL36 family.

The sequence is that of Large ribosomal subunit protein bL36 from Ureaplasma parvum serovar 3 (strain ATCC 27815 / 27 / NCTC 11736).